Reading from the N-terminus, the 564-residue chain is Rho guanine nucleotide exchange factor 9 (564 aa).

Positions Asp-8 to Asn-67 constitute an SH3 domain. Residues Arg-100 to Glu-110 form an interaction with GPHN region. A DH domain is found at Met-103 to Arg-287. Residues Glu-318–Lys-425 form the PH domain. Residues Lys-451–Pro-470 are disordered. Ser-502 is modified (phosphoserine).

As to quaternary structure, interacts with GPHN.

Its subcellular location is the cytoplasm. It localises to the postsynaptic density. Acts as a guanine nucleotide exchange factor (GEF) for CDC42. Promotes formation of GPHN clusters. This Pongo abelii (Sumatran orangutan) protein is Rho guanine nucleotide exchange factor 9 (ARHGEF9).